The primary structure comprises 218 residues: 3,4-dihydroxy-2-butanone 4-phosphate synthase (218 aa).

D-ribulose 5-phosphate contacts are provided by residues 38 to 39 (RE), aspartate 43, 151 to 155 (RRGHT), and glutamate 175. Residue glutamate 39 coordinates Mg(2+). Mg(2+) is bound at residue histidine 154.

Belongs to the DHBP synthase family. Homodimer. It depends on Mg(2+) as a cofactor. Mn(2+) serves as cofactor.

The catalysed reaction is D-ribulose 5-phosphate = (2S)-2-hydroxy-3-oxobutyl phosphate + formate + H(+). It functions in the pathway cofactor biosynthesis; riboflavin biosynthesis; 2-hydroxy-3-oxobutyl phosphate from D-ribulose 5-phosphate: step 1/1. Catalyzes the conversion of D-ribulose 5-phosphate to formate and 3,4-dihydroxy-2-butanone 4-phosphate. In Vibrio atlanticus (strain LGP32) (Vibrio splendidus (strain Mel32)), this protein is 3,4-dihydroxy-2-butanone 4-phosphate synthase.